Here is a 258-residue protein sequence, read N- to C-terminus: Small ribosomal subunit protein uS15m (258 aa).

Residues 1–57 constitute a mitochondrion transit peptide; sequence MLRAAWRALSSVRAQAVTRAPVPALRGGSSASLLSARCGLQPPSLLRAARAYAAVQK. The tract at residues 229–258 is disordered; sequence KAAAAAAKKEKNEGVPENPSNAVPEKTQVN.

It belongs to the universal ribosomal protein uS15 family. Component of the mitochondrial ribosome small subunit (28S) which comprises a 12S rRNA and about 30 distinct proteins. Interacts with METTL17.

It is found in the mitochondrion matrix. The polypeptide is Small ribosomal subunit protein uS15m (Mrps15) (Mus musculus (Mouse)).